The following is a 326-amino-acid chain: Putative ribose-phosphate pyrophosphokinase 2 (326 aa).

Residues 43-45 and 102-103 contribute to the ATP site; these read DGE and RQ. H136 serves as a coordination point for Mg(2+). D-ribose 5-phosphate contacts are provided by residues D225 and 229–233; that span reads NTGKT.

The protein belongs to the ribose-phosphate pyrophosphokinase family. Class I subfamily. Homohexamer. Mg(2+) is required as a cofactor.

It localises to the cytoplasm. It carries out the reaction D-ribose 5-phosphate + ATP = 5-phospho-alpha-D-ribose 1-diphosphate + AMP + H(+). It functions in the pathway metabolic intermediate biosynthesis; 5-phospho-alpha-D-ribose 1-diphosphate biosynthesis; 5-phospho-alpha-D-ribose 1-diphosphate from D-ribose 5-phosphate (route I): step 1/1. Its function is as follows. Involved in the biosynthesis of the central metabolite phospho-alpha-D-ribosyl-1-pyrophosphate (PRPP) via the transfer of pyrophosphoryl group from ATP to 1-hydroxyl of ribose-5-phosphate (Rib-5-P). The polypeptide is Putative ribose-phosphate pyrophosphokinase 2 (Streptococcus pyogenes serotype M18 (strain MGAS8232)).